We begin with the raw amino-acid sequence, 852 residues long: Aconitate hydratase B (852 aa).

Residues arginine 194, 237–239 (SSR), 405–407 (QDT), and serine 489 each bind substrate. 3 residues coordinate [4Fe-4S] cluster: cysteine 708, cysteine 766, and cysteine 769. Substrate contacts are provided by arginine 788 and arginine 793.

This sequence belongs to the aconitase/IPM isomerase family. In terms of assembly, monomer. The cofactor is [4Fe-4S] cluster.

The enzyme catalyses citrate = D-threo-isocitrate. The catalysed reaction is (2S,3R)-3-hydroxybutane-1,2,3-tricarboxylate = 2-methyl-cis-aconitate + H2O. It functions in the pathway carbohydrate metabolism; tricarboxylic acid cycle; isocitrate from oxaloacetate: step 2/2. The protein operates within organic acid metabolism; propanoate degradation. Its function is as follows. Involved in the catabolism of short chain fatty acids (SCFA) via the tricarboxylic acid (TCA)(acetyl degradation route) and probably via the 2-methylcitrate cycle I (propionate degradation route). Catalyzes the reversible isomerization of citrate to isocitrate via cis-aconitate. Catalyzes the hydration of 2-methyl-cis-aconitate to yield (2R,3S)-2-methylisocitrate. The apo form of AcnB functions as a RNA-binding regulatory protein. The polypeptide is Aconitate hydratase B (acnB) (Helicobacter pylori (strain J99 / ATCC 700824) (Campylobacter pylori J99)).